The sequence spans 64 residues: Translational regulator CsrA 1 (64 aa).

This sequence belongs to the CsrA/RsmA family. As to quaternary structure, homodimer; the beta-strands of each monomer intercalate to form a hydrophobic core, while the alpha-helices form wings that extend away from the core.

The protein localises to the cytoplasm. Functionally, a key translational regulator that binds mRNA to regulate translation initiation and/or mRNA stability. Mediates global changes in gene expression, shifting from rapid growth to stress survival by linking envelope stress, the stringent response and the catabolite repression systems. Usually binds in the 5'-UTR; binding at or near the Shine-Dalgarno sequence prevents ribosome-binding, repressing translation, binding elsewhere in the 5'-UTR can activate translation and/or stabilize the mRNA. Its function is antagonized by small RNA(s). The polypeptide is Translational regulator CsrA 1 (Pseudomonas syringae pv. tomato (strain ATCC BAA-871 / DC3000)).